The chain runs to 867 residues: Probable potassium transporter 15 (867 aa).

Positions 1–13 (MAASSSSSASASA) are enriched in low complexity. The tract at residues 1-88 (MAASSSSSAS…EGEGEDGEKQ (88 aa)) is disordered. Residues 1-124 (MAASSSSSAS…DSEEFDFGRT (124 aa)) lie on the Cytoplasmic side of the membrane. Positions 32-44 (TEEDDEGEEDGDT) are enriched in acidic residues. Residues 45–54 (VEAAAAAVGA) show a composition bias toward low complexity. A compositionally biased stretch (acidic residues) spans 63–84 (SEEEEDEEDGGGGGEGEGEGED). The helical transmembrane segment at 125–145 (MFLALQTLAVVFGDIGISPLY) threads the bilayer. At 146–167 (TFDVMFSKYPILGEEDVLGALS) the chain is on the extracellular side. The helical transmembrane segment at 168–188 (LVLYTLISMPLVKYVLVVLWA) threads the bilayer. The Cytoplasmic portion of the chain corresponds to 189 to 252 (NDDGEGGIFA…KLESSLLLKK (64 aa)). A helical membrane pass occupies residues 253–273 (LLLGLVLFGTAMFISNGVITP). Residues 274–285 (AMSVLSAVSGLK) lie on the Extracellular side of the membrane. The helical transmembrane segment at 286–306 (VGIPNASQGLVVMISVVLLVI) threads the bilayer. Topologically, residues 307-317 (LYSVQRYATSK) are cytoplasmic. The chain crosses the membrane as a helical span at residues 318-338 (MGFALGPSLLIWFCCLGGIGI). The Extracellular portion of the chain corresponds to 339–365 (YNLSTYGPAAFKAFNPLYIIYYFGRNP). N-linked (GlcNAc...) asparagine glycosylation occurs at Asn340. Residues 366 to 386 (FQAWLSLAGCLLCATGSEAIF) form a helical membrane-spanning segment. Topologically, residues 387–400 (ANLSYFPVRYVQSM) are cytoplasmic. The chain crosses the membrane as a helical span at residues 401 to 421 (FALLVLPCLVLAYLGQGAFLI). Over 422-433 (ANQNSSEQIFFS) the chain is Extracellular. N-linked (GlcNAc...) asparagine glycosylation occurs at Asn425. The chain crosses the membrane as a helical span at residues 434–454 (SIPSGVFWPVFLIANLAALIA). The Cytoplasmic portion of the chain corresponds to 455-490 (SRTMTTAIFQCLKQSIALGCFPRLKIIHTSRKFMAK). A helical membrane pass occupies residues 491–511 (IYIPVVNWFLLFSCLGFILLF). Residues 512–522 (RSIYDVGNAYA) are Extracellular-facing. The chain crosses the membrane as a helical span at residues 523–543 (IAELGVMIMATVYVTIIMLLI). At 544–545 (WE) the chain is on the cytoplasmic side. The helical transmembrane segment at 546–566 (TSIVKVLSFVITFLSLELVFF) threads the bilayer. The Extracellular segment spans residues 567–572 (SSSLSS). The chain crosses the membrane as a helical span at residues 573–593 (VGDGGWALIIFASGILMVMFI). Residues 594–867 (WNYGSKLKYD…VMQVRLTSYV (274 aa)) lie on the Cytoplasmic side of the membrane.

This sequence belongs to the HAK/KUP transporter (TC 2.A.72.3) family.

The protein localises to the membrane. In terms of biological role, high-affinity potassium transporter. This is Probable potassium transporter 15 (HAK15) from Oryza sativa subsp. japonica (Rice).